A 393-amino-acid polypeptide reads, in one-letter code: Riboflavin biosynthesis protein RibBA (393 aa).

The DHBP synthase stretch occupies residues 1-200; it reads MQFDTIELAI…IKSLVAFRKA (200 aa). D-ribulose 5-phosphate-binding positions include 27–28, D32, 139–143, and E163; these read RE and RNGHT. A Mg(2+)-binding site is contributed by E28. H142 is a binding site for Mg(2+). A GTP cyclohydrolase II region spans residues 201–393; that stretch reads VELNVNLKAK…TKKNKMGHLI (193 aa). 249–253 is a binding site for GTP; sequence RMHSA. Positions 254, 265, and 267 each coordinate Zn(2+). GTP-binding positions include Q270, 291–293, and T313; that span reads EGR. D325 (proton acceptor; for GTP cyclohydrolase activity) is an active-site residue. R327 serves as the catalytic Nucleophile; for GTP cyclohydrolase activity. Positions 348 and 353 each coordinate GTP.

The protein in the N-terminal section; belongs to the DHBP synthase family. It in the C-terminal section; belongs to the GTP cyclohydrolase II family. Requires Mg(2+) as cofactor. Mn(2+) is required as a cofactor. Zn(2+) serves as cofactor.

The catalysed reaction is D-ribulose 5-phosphate = (2S)-2-hydroxy-3-oxobutyl phosphate + formate + H(+). The enzyme catalyses GTP + 4 H2O = 2,5-diamino-6-hydroxy-4-(5-phosphoribosylamino)-pyrimidine + formate + 2 phosphate + 3 H(+). Its pathway is cofactor biosynthesis; riboflavin biosynthesis; 2-hydroxy-3-oxobutyl phosphate from D-ribulose 5-phosphate: step 1/1. The protein operates within cofactor biosynthesis; riboflavin biosynthesis; 5-amino-6-(D-ribitylamino)uracil from GTP: step 1/4. Its function is as follows. Catalyzes the conversion of D-ribulose 5-phosphate to formate and 3,4-dihydroxy-2-butanone 4-phosphate. In terms of biological role, catalyzes the conversion of GTP to 2,5-diamino-6-ribosylamino-4(3H)-pyrimidinone 5'-phosphate (DARP), formate and pyrophosphate. This Staphylococcus epidermidis (strain ATCC 12228 / FDA PCI 1200) protein is Riboflavin biosynthesis protein RibBA.